A 350-amino-acid chain; its full sequence is Ketol-acid reductoisomerase (NADP(+)) 2 (350 aa).

The KARI N-terminal Rossmann domain maps to 3–183 (ATIWYEKDAD…GALRAGAIKT (181 aa)). NADP(+) contacts are provided by residues 26-29 (YGSQ), arginine 49, serine 52, serine 54, and 84-87 (DQYQ). Histidine 109 is an active-site residue. Glycine 135 contacts NADP(+). Residues 184–327 (TFTEETETDL…PKLRAMFSWN (144 aa)) enclose the KARI C-terminal knotted domain. The Mg(2+) site is built by aspartate 192, glutamate 196, glutamate 228, and glutamate 232. Serine 253 is a binding site for substrate. Residues 331–350 (AKDKDETESFNGKIARTQVQ) form a disordered region.

The protein belongs to the ketol-acid reductoisomerase family. Requires Mg(2+) as cofactor.

The catalysed reaction is (2R)-2,3-dihydroxy-3-methylbutanoate + NADP(+) = (2S)-2-acetolactate + NADPH + H(+). The enzyme catalyses (2R,3R)-2,3-dihydroxy-3-methylpentanoate + NADP(+) = (S)-2-ethyl-2-hydroxy-3-oxobutanoate + NADPH + H(+). Its pathway is amino-acid biosynthesis; L-isoleucine biosynthesis; L-isoleucine from 2-oxobutanoate: step 2/4. The protein operates within amino-acid biosynthesis; L-valine biosynthesis; L-valine from pyruvate: step 2/4. In terms of biological role, involved in the biosynthesis of branched-chain amino acids (BCAA). Catalyzes an alkyl-migration followed by a ketol-acid reduction of (S)-2-acetolactate (S2AL) to yield (R)-2,3-dihydroxy-isovalerate. In the isomerase reaction, S2AL is rearranged via a Mg-dependent methyl migration to produce 3-hydroxy-3-methyl-2-ketobutyrate (HMKB). In the reductase reaction, this 2-ketoacid undergoes a metal-dependent reduction by NADPH to yield (R)-2,3-dihydroxy-isovalerate. The polypeptide is Ketol-acid reductoisomerase (NADP(+)) 2 (Bifidobacterium longum (strain NCC 2705)).